The following is an 863-amino-acid chain: Scm-like with four MBT domains protein 1 (863 aa).

MBT repeat units follow at residues 20-120 (FSWE…LEAP), 128-232 (SDWS…LQPP), 242-346 (ADWQ…INPP), and 354-451 (FDWA…LSTP). A disordered region spans residues 638 to 773 (KKKNKRIGRP…SDGENKPPSP (136 aa)). Basic residues predominate over residues 660 to 679 (KTSKRRKRRKNIFVHKKKRS). Polar residues predominate over residues 680–691 (SASVDNTPVGSP). Residues 696 to 710 (GEDEDDADDGDDDSL) are compositionally biased toward acidic residues. A phosphoserine mark is found at serine 764 and serine 772. The SAM domain maps to 793–861 (WSVADVVRFI…RIKFAFYEQF (69 aa)).

Interacts with MYOD1. Component of the SLC (SFMBT1-LSD1-CoREST) corepressor complex, which also contains KDM1A/LSD1 and RCOR1/CoREST. Interacts with KDM1A/LSD1 and RCOR1/CoREST. Interacts with MYOD1. Interacts with L3MBTL3. Highly expressed in the testis, low expression was detected in brain, kidney, heart and lung.

The protein resides in the nucleus. In terms of biological role, histone-binding protein, which is part of various corepressor complexes. Mediates the recruitment of corepressor complexes to target genes, followed by chromatin compaction and repression of transcription. Plays a role during myogenesis: required for the maintenance of undifferentiated states of myogenic progenitor cells via interaction with MYOD1. Interaction with MYOD1 leads to the recruitment of associated corepressors and silencing of MYOD1 target genes. Part of the SLC complex in germ cells, where it may play a role during spermatogenesis. The polypeptide is Scm-like with four MBT domains protein 1 (Sfmbt1) (Rattus norvegicus (Rat)).